The sequence spans 377 residues: Chorismate synthase (377 aa).

Position 47 (R47) interacts with NADP(+). FMN is bound by residues 124-126, 252-253, G296, 311-315, and R338; these read RSS, NS, and KPTPS.

This sequence belongs to the chorismate synthase family. It depends on FMNH2 as a cofactor.

It catalyses the reaction 5-O-(1-carboxyvinyl)-3-phosphoshikimate = chorismate + phosphate. It functions in the pathway metabolic intermediate biosynthesis; chorismate biosynthesis; chorismate from D-erythrose 4-phosphate and phosphoenolpyruvate: step 7/7. Functionally, catalyzes the anti-1,4-elimination of the C-3 phosphate and the C-6 proR hydrogen from 5-enolpyruvylshikimate-3-phosphate (EPSP) to yield chorismate, which is the branch point compound that serves as the starting substrate for the three terminal pathways of aromatic amino acid biosynthesis. This reaction introduces a second double bond into the aromatic ring system. The polypeptide is Chorismate synthase (Methanococcus vannielii (strain ATCC 35089 / DSM 1224 / JCM 13029 / OCM 148 / SB)).